The chain runs to 382 residues: D-galactonate dehydratase (382 aa).

D183 serves as a coordination point for Mg(2+). H185 acts as the Proton donor in catalysis. Mg(2+)-binding residues include E209 and E235. H285 serves as the catalytic Proton acceptor.

Belongs to the mandelate racemase/muconate lactonizing enzyme family. GalD subfamily. Mg(2+) is required as a cofactor.

It carries out the reaction D-galactonate = 2-dehydro-3-deoxy-D-galactonate + H2O. It functions in the pathway carbohydrate acid metabolism; D-galactonate degradation; D-glyceraldehyde 3-phosphate and pyruvate from D-galactonate: step 1/3. Its function is as follows. Catalyzes the dehydration of D-galactonate to 2-keto-3-deoxy-D-galactonate. The chain is D-galactonate dehydratase from Escherichia coli (strain 55989 / EAEC).